A 244-amino-acid polypeptide reads, in one-letter code: UPF0173 metal-dependent hydrolase Rcas_3617 (244 aa).

It belongs to the UPF0173 family.

In Roseiflexus castenholzii (strain DSM 13941 / HLO8), this protein is UPF0173 metal-dependent hydrolase Rcas_3617.